The sequence spans 75 residues: ATP synthase subunit epsilon, mitochondrial (75 aa).

A mitochondrion-targeting transit peptide spans 1–9; the sequence is MIRRSCALL.

This sequence belongs to the eukaryotic ATPase epsilon family. In terms of assembly, F-type ATPases have 2 components, F(1) - the catalytic core - and F(o) - the membrane proton channel. F(1) has five subunits: alpha(3), beta(3), gamma(1), delta(1), epsilon(1), plus the additional subunit P18 (Tb427.05.1710) that is not present in F(1)F(o) ATP synthase from metazoa. Subunit P18 (Tb927.5.1710) interacts with the alpha subunit with a 1:1 stoichiometry; the interaction is direct. Subunit gamma is part of the central stalk. F(o) has three main subunits: a, b and c. The trypanosomal ATPase complex contains additional subunits that are not present in the F(1)F(o) ATP synthase from metazoa.

The protein localises to the mitochondrion. The protein resides in the mitochondrion inner membrane. Mitochondrial membrane ATP synthase (F(1)F(o) ATP synthase) produces ATP from ADP in the presence of a proton gradient across the membrane which is generated by electron transport complexes of the respiratory chain. F-type ATPases consist of two structural domains, F(1) - containing the extramembraneous catalytic core, and F(o) - containing the membrane proton channel, linked together by a central stalk and a peripheral stalk. During catalysis, ATP synthesis in the catalytic domain of F(1) is coupled via a rotary mechanism of the central stalk subunits to proton translocation. Subunits alpha and beta form the catalytic core in F(1). Rotation of the central stalk against the surrounding alpha(3)beta(3) subunits leads to hydrolysis of ATP in three separate catalytic sites on the beta subunits. Contrary to the procyclic, insect form that requires F(1)F(o) ATP synthase for ATP synthesis, the bloodstream form relies on ATP hydrolysis by F(1)F(o) ATP synthase to maintain its mitochondrial membrane potential. This chain is ATP synthase subunit epsilon, mitochondrial, found in Trypanosoma brucei brucei.